We begin with the raw amino-acid sequence, 161 residues long: E3 ubiquitin ligase complex SCF subunit sconC (161 aa).

The tract at residues 103-161 (ILAANYLDIKGLLDVGCKTVANMIKGKSPEEIRKTFNIQNDFTPEEEDQIRRENEWAEE) is interaction with the F-box domain of F-box proteins.

Belongs to the SKP1 family. As to quaternary structure, component of the SCF (SKP1-CUL1-F-box protein) E3 ubiquitin ligase complexes.

It participates in protein modification; protein ubiquitination. Functionally, essential component of the SCF (SKP1-CUL1-F-box protein) E3 ubiquitin ligase complexes, which mediate the ubiquitination and subsequent proteasomal degradation of target proteins. Controls sulfur metabolite repression, probably by mediating the inactivation or degradation of the metR transcription factor. The protein is E3 ubiquitin ligase complex SCF subunit sconC (sconC) of Aspergillus terreus (strain NIH 2624 / FGSC A1156).